The following is a 323-amino-acid chain: L-lactate dehydrogenase (323 aa).

NAD(+) is bound by residues V12, D33, and Y65. Residues R94 and 126–129 (NPCD) each bind substrate. Residue T149 coordinates NAD(+). 154 to 157 (ETMR) is a substrate binding site. H181 (proton acceptor) is an active-site residue. T234 lines the substrate pocket.

It belongs to the LDH/MDH superfamily. LDH family. In terms of assembly, homotetramer.

The protein localises to the cytoplasm. It carries out the reaction (S)-lactate + NAD(+) = pyruvate + NADH + H(+). It participates in fermentation; pyruvate fermentation to lactate; (S)-lactate from pyruvate: step 1/1. In terms of biological role, catalyzes the conversion of lactate to pyruvate. In Mycoplasmoides gallisepticum (strain R(low / passage 15 / clone 2)) (Mycoplasma gallisepticum), this protein is L-lactate dehydrogenase.